The sequence spans 229 residues: MEVSKIRIHDLPEEERPRERLIKNGPESLSNAELLGIVLRTGSREENVISLCSRILMEYNIKQLSLANVSKLMQVNGIGKAKAAQIAAVFELARRLETFVEEPKRKISSPKDVYTLMYPKMREQKKEKFITLYLDTKNQILKEEVVSIGSLNASIVHPREVFKSALMESSASVIMVHNHPSGDPSPSREDIMVTEKLVEGGKLLGIDILDHIIIGDGRYVSLKDEGFVK.

Residues 106–228 (KISSPKDVYT…YVSLKDEGFV (123 aa)) enclose the MPN domain. Zn(2+) is bound by residues His-177, His-179, and Asp-190. Residues 177-190 (HNHPSGDPSPSRED) carry the JAMM motif motif.

Belongs to the UPF0758 family.

In Methanosarcina mazei (strain ATCC BAA-159 / DSM 3647 / Goe1 / Go1 / JCM 11833 / OCM 88) (Methanosarcina frisia), this protein is UPF0758 protein MM_2791.